The following is a 176-amino-acid chain: Adenine phosphoribosyltransferase (176 aa).

It belongs to the purine/pyrimidine phosphoribosyltransferase family. Homodimer.

It localises to the cytoplasm. It carries out the reaction AMP + diphosphate = 5-phospho-alpha-D-ribose 1-diphosphate + adenine. Its pathway is purine metabolism; AMP biosynthesis via salvage pathway; AMP from adenine: step 1/1. Its function is as follows. Catalyzes a salvage reaction resulting in the formation of AMP, that is energically less costly than de novo synthesis. In Roseobacter denitrificans (strain ATCC 33942 / OCh 114) (Erythrobacter sp. (strain OCh 114)), this protein is Adenine phosphoribosyltransferase.